The chain runs to 100 residues: Large ribosomal subunit protein uL23 (100 aa).

This sequence belongs to the universal ribosomal protein uL23 family. Part of the 50S ribosomal subunit. Contacts protein L29, and trigger factor when it is bound to the ribosome.

One of the early assembly proteins it binds 23S rRNA. One of the proteins that surrounds the polypeptide exit tunnel on the outside of the ribosome. Forms the main docking site for trigger factor binding to the ribosome. This is Large ribosomal subunit protein uL23 from Synechococcus elongatus (strain ATCC 33912 / PCC 7942 / FACHB-805) (Anacystis nidulans R2).